A 381-amino-acid polypeptide reads, in one-letter code: p55-v-Fos-transforming protein (381 aa).

The region spanning 137–200 (EEKRRIRRER…EKLEFILAAH (64 aa)) is the bZIP domain. The basic motif stretch occupies residues 139-159 (KRRIRRERNKMAAAKCRNRRR). The interval 165–193 (LQAETDQLEDKKSALQTEIANLLKEKEKL) is leucine-zipper.

This sequence belongs to the bZIP family. Fos subfamily.

The protein resides in the host nucleus. This is p55-v-Fos-transforming protein (V-FOS) from Mus musculus (Mouse).